The chain runs to 29 residues: Cytochrome b6-f complex subunit 8 (29 aa).

A helical transmembrane segment spans residues 3-23 (IVSLAWAALMVVFTFSLSLVV).

It belongs to the PetN family. In terms of assembly, the 4 large subunits of the cytochrome b6-f complex are cytochrome b6, subunit IV (17 kDa polypeptide, PetD), cytochrome f and the Rieske protein, while the 4 small subunits are PetG, PetL, PetM and PetN. The complex functions as a dimer.

It is found in the plastid. The protein localises to the chloroplast thylakoid membrane. Functionally, component of the cytochrome b6-f complex, which mediates electron transfer between photosystem II (PSII) and photosystem I (PSI), cyclic electron flow around PSI, and state transitions. In Solanum bulbocastanum (Wild potato), this protein is Cytochrome b6-f complex subunit 8.